The sequence spans 134 residues: Small ribosomal subunit protein uS11 (134 aa).

This sequence belongs to the universal ribosomal protein uS11 family. As to quaternary structure, part of the 30S ribosomal subunit. Interacts with proteins S7 and S18. Binds to IF-3.

In terms of biological role, located on the platform of the 30S subunit, it bridges several disparate RNA helices of the 16S rRNA. Forms part of the Shine-Dalgarno cleft in the 70S ribosome. In Polaromonas sp. (strain JS666 / ATCC BAA-500), this protein is Small ribosomal subunit protein uS11.